We begin with the raw amino-acid sequence, 298 residues long: Nucleotide-binding protein Csal_2229 (298 aa).

8 to 15 lines the ATP pocket; it reads GRSGSGKS. 59–62 contributes to the GTP binding site; it reads DARN.

It belongs to the RapZ-like family.

Functionally, displays ATPase and GTPase activities. The sequence is that of Nucleotide-binding protein Csal_2229 from Chromohalobacter salexigens (strain ATCC BAA-138 / DSM 3043 / CIP 106854 / NCIMB 13768 / 1H11).